The chain runs to 295 residues: GTP-binding protein GEM (295 aa).

Residues 39-64 (CNLRNRHSTAPEEHCRRSWSSDSTDS) form a disordered region. Residues 81–88 (GEQGVGKS) and 190–193 (NKSD) contribute to the GTP site. The calmodulin-binding stretch occupies residues 265–284 (ARRFWGKIVAKNNKNMAFKL).

This sequence belongs to the small GTPase superfamily. RGK family. As to quaternary structure, interacts with calmodulin in a Ca(2+)-dependent manner. Calmodulin binding significantly decreases GTP binding. Binds ROCK1. Post-translationally, phosphorylated on tyrosine residues.

Its subcellular location is the cell membrane. Its function is as follows. Could be a regulatory protein, possibly participating in receptor-mediated signal transduction at the plasma membrane. Has guanine nucleotide-binding activity but undetectable intrinsic GTPase activity. The polypeptide is GTP-binding protein GEM (Gem) (Mus musculus (Mouse)).